A 90-amino-acid chain; its full sequence is Protein RL8A (90 aa).

A helical transmembrane segment spans residues 15-34; it reads WTCEGLLLLLGLLVLFFHHH. Residues 55–90 form a disordered region; it reads HESGWYSSDDDGDRDGDEETGESHNRNSVGLSAVFS. Over residues 62 to 74 the composition is skewed to acidic residues; that stretch reads SDDDGDRDGDEET. Residues 80-90 show a composition bias toward polar residues; that stretch reads RNSVGLSAVFS.

It localises to the host membrane. In Homo sapiens (Human), this protein is Protein RL8A (RL8A).